A 355-amino-acid polypeptide reads, in one-letter code: MEANSNSAVPLCTPYKLGRFKLTHRIVFPALTRNRSQNNTPQSHLTEYYSQRATNGGLIISEAAAASDISKECPNLPGIWNEEQVEAWKPVVNGVHEKGGVFFCQIWHSGRLSVPTVSALFFSIGIGWSTRPDDKVYAKPTPLPLESDKIPCIVNDFRIAARNAIKAGFDGIEINASSGGYLIDEFMNDQVHGWTDEYDESIKDRCRLALEIVEAVANEIGADKIGIKLSPFDGKKDSNSEALATYMANELSKLGVLYLHVMEPRETVNRSLLPIRKAFKGTLIASGGYGKSDGEKAIDENYADLISFGRMFLANPDLPKRFEVNAPLNKYNRSTFYTNDPIIGYTDYPFLEVAS.

FMN contacts are provided by residues 30 to 32, Ala63, and Gln105; that span reads ALT. A substrate-binding site is contributed by 175–178; it reads NASS. Tyr181 (proton donor) is an active-site residue. Arg265 contacts substrate. Residues Gly288 and 309-310 each bind FMN; that span reads GR.

The protein belongs to the NADH:flavin oxidoreductase/NADH oxidase family. Requires FMN as cofactor. In terms of tissue distribution, weakly expressed in flowers and roots.

The protein resides in the cytoplasm. Functionally, may be involved in the biosynthesis or metabolism of oxylipin signaling molecules. The protein is 12-oxophytodienoate reductase-like protein (OPR2) of Solanum lycopersicum (Tomato).